Here is a 426-residue protein sequence, read N- to C-terminus: UPF0329 protein ECU06_0040 (426 aa).

A compositionally biased stretch (basic and acidic residues) spans 136-172; the sequence is RQRKREEETERSVKELVGDEEKAKSKEEKAKSKEEKA. A disordered region spans residues 136–230; it reads RQRKREEETE…GGKKKSKGGR (95 aa). Residues 220-230 are compositionally biased toward basic residues; the sequence is KGGKKKSKGGR.

The protein belongs to the UPF0329 family.

This is UPF0329 protein ECU06_0040 from Encephalitozoon cuniculi (strain GB-M1) (Microsporidian parasite).